The sequence spans 214 residues: ATP phosphoribosyltransferase (214 aa).

The protein belongs to the ATP phosphoribosyltransferase family. Short subfamily. In terms of assembly, heteromultimer composed of HisG and HisZ subunits.

It localises to the cytoplasm. It carries out the reaction 1-(5-phospho-beta-D-ribosyl)-ATP + diphosphate = 5-phospho-alpha-D-ribose 1-diphosphate + ATP. It participates in amino-acid biosynthesis; L-histidine biosynthesis; L-histidine from 5-phospho-alpha-D-ribose 1-diphosphate: step 1/9. Its function is as follows. Catalyzes the condensation of ATP and 5-phosphoribose 1-diphosphate to form N'-(5'-phosphoribosyl)-ATP (PR-ATP). Has a crucial role in the pathway because the rate of histidine biosynthesis seems to be controlled primarily by regulation of HisG enzymatic activity. The protein is ATP phosphoribosyltransferase of Nostoc punctiforme (strain ATCC 29133 / PCC 73102).